Consider the following 124-residue polypeptide: Large ribosomal subunit protein eL22z (124 aa).

Belongs to the eukaryotic ribosomal protein eL22 family.

The protein is Large ribosomal subunit protein eL22z (RPL22B) of Arabidopsis thaliana (Mouse-ear cress).